The sequence spans 382 residues: ATP phosphoribosyltransferase regulatory subunit (382 aa).

It belongs to the class-II aminoacyl-tRNA synthetase family. HisZ subfamily. Heteromultimer composed of HisG and HisZ subunits.

It localises to the cytoplasm. It participates in amino-acid biosynthesis; L-histidine biosynthesis; L-histidine from 5-phospho-alpha-D-ribose 1-diphosphate: step 1/9. Its function is as follows. Required for the first step of histidine biosynthesis. May allow the feedback regulation of ATP phosphoribosyltransferase activity by histidine. This chain is ATP phosphoribosyltransferase regulatory subunit, found in Burkholderia ambifaria (strain ATCC BAA-244 / DSM 16087 / CCUG 44356 / LMG 19182 / AMMD) (Burkholderia cepacia (strain AMMD)).